The primary structure comprises 345 residues: Meiotic recombination protein rec12 (345 aa).

The Topo IIA-type catalytic domain maps to 5–137 (DKKKVVRSWI…LNVEASAKGL (133 aa)). The active-site O-(5'-phospho-DNA)-tyrosine intermediate is the tyrosine 98. Residues glutamate 179 and aspartate 229 each contribute to the Mg(2+) site.

Belongs to the TOP6A family. Component of the DSB catalytic core (DSBC) complex, composed of at least rec12, rec6 and rec14. The complex interacts with mde2. Requires Mg(2+) as cofactor.

The protein resides in the cytoplasm. It localises to the nucleus. It catalyses the reaction ATP-dependent breakage, passage and rejoining of double-stranded DNA.. Required for formation of the double-strand breaks (DSBs) that initiate meiotic recombination. Required for crossover recombination and chiasmatic segregation of chromosomes during meiosis I. Also involved in the faithful equational segregation of chromosomes during meiosis II. In Schizosaccharomyces pombe (strain 972 / ATCC 24843) (Fission yeast), this protein is Meiotic recombination protein rec12.